A 316-amino-acid chain; its full sequence is Transaldolase (316 aa).

Catalysis depends on Lys132, which acts as the Schiff-base intermediate with substrate.

Belongs to the transaldolase family. Type 1 subfamily.

The protein localises to the cytoplasm. The enzyme catalyses D-sedoheptulose 7-phosphate + D-glyceraldehyde 3-phosphate = D-erythrose 4-phosphate + beta-D-fructose 6-phosphate. The protein operates within carbohydrate degradation; pentose phosphate pathway; D-glyceraldehyde 3-phosphate and beta-D-fructose 6-phosphate from D-ribose 5-phosphate and D-xylulose 5-phosphate (non-oxidative stage): step 2/3. Its function is as follows. Transaldolase is important for the balance of metabolites in the pentose-phosphate pathway. The sequence is that of Transaldolase from Vibrio cholerae serotype O1 (strain ATCC 39315 / El Tor Inaba N16961).